The following is a 134-amino-acid chain: Protein NrdI (134 aa).

The protein belongs to the NrdI family.

Probably involved in ribonucleotide reductase function. The chain is Protein NrdI from Yersinia pseudotuberculosis serotype O:1b (strain IP 31758).